The primary structure comprises 164 residues: MALLTTDLCDAYADEPGAQLRAMNPMLIGYGGRARFGGPVTTLKLFEDNVRVRELLSAPGDGGVLVVDGGGSMRCALLGDRLAELGRENGWSGAIIYGCVRDSAELAQIDFGVQALNTHPLKSQKKGLGERDVSVTFAGVTIQSGDWLYADEDGVVVASRELTL.

Substrate contacts are provided by residues 79-82 (GDRL) and Arg-101. Residue Asp-102 coordinates a divalent metal cation.

It belongs to the class II aldolase/RraA-like family. Homotrimer. Requires a divalent metal cation as cofactor.

It catalyses the reaction 4-hydroxy-4-methyl-2-oxoglutarate = 2 pyruvate. It carries out the reaction oxaloacetate + H(+) = pyruvate + CO2. Functionally, catalyzes the aldol cleavage of 4-hydroxy-4-methyl-2-oxoglutarate (HMG) into 2 molecules of pyruvate. Also contains a secondary oxaloacetate (OAA) decarboxylase activity due to the common pyruvate enolate transition state formed following C-C bond cleavage in the retro-aldol and decarboxylation reactions. This chain is Putative 4-hydroxy-4-methyl-2-oxoglutarate aldolase, found in Halorhodospira halophila (strain DSM 244 / SL1) (Ectothiorhodospira halophila (strain DSM 244 / SL1)).